Reading from the N-terminus, the 554-residue chain is CTP synthase (554 aa).

Residues 1-265 (MTPLIFVTGG…DELVIEQFKL (265 aa)) are amidoligase domain. Ser13 is a binding site for CTP. Ser13 contacts UTP. ATP contacts are provided by residues 14-19 (SLGKGI) and Asp71. Asp71 and Glu139 together coordinate Mg(2+). CTP is bound by residues 146-148 (DIE), 186-191 (KTKPTQ), and Lys222. Residues 186-191 (KTKPTQ) and Lys222 each bind UTP. One can recognise a Glutamine amidotransferase type-1 domain in the interval 292 to 545 (NIAVVGKYVD…VRAAREKKAG (254 aa)). L-glutamine is bound at residue Gly353. Cys380 functions as the Nucleophile; for glutamine hydrolysis in the catalytic mechanism. Residues 381–384 (YGMQ), Glu404, and Arg471 each bind L-glutamine. Residues His518 and Glu520 contribute to the active site.

This sequence belongs to the CTP synthase family. As to quaternary structure, homotetramer.

It catalyses the reaction UTP + L-glutamine + ATP + H2O = CTP + L-glutamate + ADP + phosphate + 2 H(+). It carries out the reaction L-glutamine + H2O = L-glutamate + NH4(+). The enzyme catalyses UTP + NH4(+) + ATP = CTP + ADP + phosphate + 2 H(+). It participates in pyrimidine metabolism; CTP biosynthesis via de novo pathway; CTP from UDP: step 2/2. With respect to regulation, allosterically activated by GTP, when glutamine is the substrate; GTP has no effect on the reaction when ammonia is the substrate. The allosteric effector GTP functions by stabilizing the protein conformation that binds the tetrahedral intermediate(s) formed during glutamine hydrolysis. Inhibited by the product CTP, via allosteric rather than competitive inhibition. In terms of biological role, catalyzes the ATP-dependent amination of UTP to CTP with either L-glutamine or ammonia as the source of nitrogen. Regulates intracellular CTP levels through interactions with the four ribonucleotide triphosphates. In Xanthomonas euvesicatoria pv. vesicatoria (strain 85-10) (Xanthomonas campestris pv. vesicatoria), this protein is CTP synthase.